Consider the following 269-residue polypeptide: MASSSASSVPAPSGSVITIASASASAAANTAACGTGSPCAACKFLRRKCQPDCVFAPYFPPDNPQKFVHVHRVFGASNVTKLLNELHPYQREDAVNSLAYEADMRLRDPVYGCVAIISILQRNLRQLQQDLARAKFELSKYQQAAAAAAAASASTGTNNGPHSMAEFIGNAVPNGAQSFINVGHSAALASVGGAAACFGQEQQFSAVHMLSRSYEGEPIARLGGNGGYEFGYSTSMAGGGHMSGLGALGGAPFLKSGIAGSDERQGAGQ.

Residues 37–138 (SPCAACKFLR…QDLARAKFEL (102 aa)) enclose the LOB domain.

This sequence belongs to the LOB domain-containing protein family.

It is found in the nucleus. Functionally, negative regulator of cell proliferation in the adaxial side of leaves. Regulates the formation of a symmetric lamina and the establishment of venation. This chain is LOB domain-containing protein 6 (LBD6), found in Oryza sativa subsp. indica (Rice).